Consider the following 351-residue polypeptide: tRNA pseudouridine synthase D (351 aa).

The active-site Nucleophile is the Asp-96. One can recognise a TRUD domain in the interval 174–304 (GAPNYFGPQR…MKPERRPLVA (131 aa)). The interval 244–268 (VLPGEPEPSGAGPTGPLWGDGGTLA) is disordered.

This sequence belongs to the pseudouridine synthase TruD family.

The catalysed reaction is uridine(13) in tRNA = pseudouridine(13) in tRNA. Responsible for synthesis of pseudouridine from uracil-13 in transfer RNAs. The protein is tRNA pseudouridine synthase D of Marinobacter nauticus (strain ATCC 700491 / DSM 11845 / VT8) (Marinobacter aquaeolei).